Reading from the N-terminus, the 296-residue chain is UDP-N-acetylenolpyruvoylglucosamine reductase (296 aa).

An FAD-binding PCMH-type domain is found at 26–191; it reads RIGGPANYFK…LSATFRLSKS (166 aa). Residue R170 is part of the active site. The Proton donor role is filled by C218. E287 is an active-site residue.

The protein belongs to the MurB family. FAD is required as a cofactor.

Its subcellular location is the cytoplasm. The enzyme catalyses UDP-N-acetyl-alpha-D-muramate + NADP(+) = UDP-N-acetyl-3-O-(1-carboxyvinyl)-alpha-D-glucosamine + NADPH + H(+). It participates in cell wall biogenesis; peptidoglycan biosynthesis. Cell wall formation. In Chlamydia felis (strain Fe/C-56) (Chlamydophila felis), this protein is UDP-N-acetylenolpyruvoylglucosamine reductase.